The following is a 72-amino-acid chain: Sec-independent protein translocase protein TatA (72 aa).

The helical transmembrane segment at 1 to 21 threads the bilayer; the sequence is MGSFSIWHWLIVLAVVLLLFG. The interval 43-72 is disordered; it reads MADEDAKEDPRTIDAKAEEPVKDVKKTTKS. Residues 50–72 show a composition bias toward basic and acidic residues; it reads EDPRTIDAKAEEPVKDVKKTTKS.

It belongs to the TatA/E family. The Tat system comprises two distinct complexes: a TatABC complex, containing multiple copies of TatA, TatB and TatC subunits, and a separate TatA complex, containing only TatA subunits. Substrates initially bind to the TatABC complex, which probably triggers association of the separate TatA complex to form the active translocon.

The protein resides in the cell inner membrane. Part of the twin-arginine translocation (Tat) system that transports large folded proteins containing a characteristic twin-arginine motif in their signal peptide across membranes. TatA could form the protein-conducting channel of the Tat system. The polypeptide is Sec-independent protein translocase protein TatA (Brucella suis biovar 1 (strain 1330)).